The following is a 220-amino-acid chain: Riboflavin kinase (220 aa).

Residues 1 to 92 form an H-T-H motif-like region; sequence METDDQYYRA…LSRILAIKNN (92 aa). The segment at 93–220 is riboflavin kinase; that stretch reads VVITGTVTSG…GDRVSVEVYT (128 aa). 102–107 is a binding site for CDP; sequence GMGEGR. Positions 131 and 133 each coordinate Mg(2+). FMN contacts are provided by threonine 188 and glutamate 195. Residue 200 to 203 coordinates CDP; sequence KYLR.

It belongs to the archaeal riboflavin kinase family. It depends on Mg(2+) as a cofactor.

The catalysed reaction is riboflavin + CTP = CDP + FMN + H(+). It functions in the pathway cofactor biosynthesis; FMN biosynthesis; FMN from riboflavin (CTP route): step 1/1. Catalyzes the CTP-dependent phosphorylation of riboflavin (vitamin B2) to form flavin mononucleotide (FMN). This is Riboflavin kinase (ribK) from Thermoplasma acidophilum (strain ATCC 25905 / DSM 1728 / JCM 9062 / NBRC 15155 / AMRC-C165).